A 1224-amino-acid polypeptide reads, in one-letter code: Dynactin subunit 1 (1224 aa).

Positions 1 to 10 are enriched in basic residues; sequence MAQSRRHPHG. Residues 1 to 30 form a disordered region; that stretch reads MAQSRRHPHGRASSAGPRMSTEASSKPLKV. In terms of domain architecture, CAP-Gly spans 49–91; the sequence is GATLXATGKWVGVILDEAKGKNDGTVQGRKYFTCEENHGIFVR. 3 disordered regions span residues 100 to 217, 374 to 402, and 888 to 918; these read DGAD…RSQV, SASEKQEHVKLQKQMEKKNTELESLRQQR, and PHCHHEQDATAMQEGEYDADRPQSKPTPPAE. A compositionally biased stretch (basic residues) spans 117 to 146; the sequence is VPKRHSRXAAKGSKLRGAKPKKTTARRPKP. The segment covering 148–180 has biased composition (low complexity); it reads RTPTSAPSSGTAGPSGSASASGGEMSSSEPSTP. Residues 205–540 adopt a coiled-coil conformation; the sequence is SPTKEEENLR…QEASAEKQQQ (336 aa). Residues 207–217 are compositionally biased toward basic and acidic residues; that stretch reads TKEEENLRSQV. Coiled coils occupy residues 936 to 1042 and 1081 to 1117; these read LKLE…EGLR and KDSPLLLQQIEALQLSIRHLKNENNRLKGAQMKLELA. Positions 1203–1224 are disordered; that stretch reads WCSSSRARASPPASACSPPRPS. The span at 1204–1224 shows a compositional bias: low complexity; the sequence is CSSSRARASPPASACSPPRPS.

It belongs to the dynactin 150 kDa subunit family. Monomer and homodimer. Subunit of dynactin, a multiprotein complex part of a tripartite complex with dynein and a adapter, such as BICDL1, BICD2 or HOOK3. The dynactin complex is built around ACTR1A/ACTB filament and consists of an actin-related filament composed of a shoulder domain, a pointed end and a barbed end. Its length is defined by its flexible shoulder domain. The soulder is composed of 2 DCTN1 subunits, 4 DCTN2 and 2 DCTN3. DCTN1/p150(glued) binds directly to microtubules and to cytoplasmic dynein. As to expression, ubiquitously expressed.

It is found in the cytoplasm. Its subcellular location is the cytoskeleton. The protein localises to the microtubule organizing center. The protein resides in the centrosome. It localises to the centriole. It is found in the spindle. Its subcellular location is the cell cortex. Part of the dynactin complex that activates the molecular motor dynein for ultra-processive transport along microtubules. Plays a key role in dynein-mediated retrograde transport of vesicles and organelles along microtubules by recruiting and tethering dynein to microtubules. Binds to both dynein and microtubules providing a link between specific cargos, microtubules and dynein. Essential for targeting dynein to microtubule plus ends, recruiting dynein to membranous cargos and enhancing dynein processivity (the ability to move along a microtubule for a long distance without falling off the track). Can also act as a brake to slow the dynein motor during motility along the microtubule. Can regulate microtubule stability by promoting microtubule formation, nucleation and polymerization and by inhibiting microtubule catastrophe in neurons. Inhibits microtubule catastrophe by binding both to microtubules and to tubulin, leading to enhanced microtubule stability along the axon. Plays a role in metaphase spindle orientation. Plays a role in centriole cohesion and subdistal appendage organization and function. Its recruitment to the centriole in a KIF3A-dependent manner is essential for the maintenance of centriole cohesion and the formation of subdistal appendage. Also required for microtubule anchoring at the mother centriole. Plays a role in primary cilia formation. This is Dynactin subunit 1 (DCTN1) from Gallus gallus (Chicken).